The following is a 238-amino-acid chain: Aspartate/glutamate leucyltransferase (238 aa).

The protein belongs to the R-transferase family. Bpt subfamily.

It is found in the cytoplasm. It catalyses the reaction N-terminal L-glutamyl-[protein] + L-leucyl-tRNA(Leu) = N-terminal L-leucyl-L-glutamyl-[protein] + tRNA(Leu) + H(+). The catalysed reaction is N-terminal L-aspartyl-[protein] + L-leucyl-tRNA(Leu) = N-terminal L-leucyl-L-aspartyl-[protein] + tRNA(Leu) + H(+). In terms of biological role, functions in the N-end rule pathway of protein degradation where it conjugates Leu from its aminoacyl-tRNA to the N-termini of proteins containing an N-terminal aspartate or glutamate. The sequence is that of Aspartate/glutamate leucyltransferase from Shewanella sp. (strain MR-4).